The following is a 210-amino-acid chain: Large ribosomal subunit protein uL3 (210 aa).

Belongs to the universal ribosomal protein uL3 family. Part of the 50S ribosomal subunit. Forms a cluster with proteins L14 and L19.

Its function is as follows. One of the primary rRNA binding proteins, it binds directly near the 3'-end of the 23S rRNA, where it nucleates assembly of the 50S subunit. In Solibacter usitatus (strain Ellin6076), this protein is Large ribosomal subunit protein uL3.